The chain runs to 216 residues: Nucleolar protein 12 (216 aa).

The stretch at 33–97 forms a coiled coil; the sequence is GFHKRKVERK…LVTAKTESVQ (65 aa). The segment at 120–216 is disordered; the sequence is LLGLPLPEQG…MTGKARHNGE (97 aa). Acidic residues predominate over residues 129–140; the sequence is GDQDGSQEEEVS. 2 stretches are compositionally biased toward basic residues: residues 171-183 and 200-216; these read AHSR…KHPR and KTQR…HNGE.

Belongs to the RRP17 family. Interacts with KIAA1191.

The protein resides in the nucleus. It is found in the nucleolus. Its subcellular location is the cytoplasm. Multifunctional RNA binding protein that plays a role in RNA metabolism and DNA maintenance. Participates in the resolution of DNA stress and the maintenance of genome integrity by localizing to sites of DNA insults. Also plays a role in proper nucleolar organization by limiting nucleolar size and regulating nucleolar number. Mechanistically, regulates the nucleolar levels of fibrillarin and nucleolin, two key players in pre-rRNA processing and ribosome assembly. The polypeptide is Nucleolar protein 12 (Nol12) (Rattus norvegicus (Rat)).